Reading from the N-terminus, the 403-residue chain is Tyrosine--tRNA ligase (403 aa).

Residues 45–54 (PTAPDLHLGH) carry the 'HIGH' region motif. The short motif at 229–233 (KMSKS) is the 'KMSKS' region element. K232 serves as a coordination point for ATP. Positions 341–402 (VLLGRLLAEA…GKRRFARIVF (62 aa)) constitute an S4 RNA-binding domain.

This sequence belongs to the class-I aminoacyl-tRNA synthetase family. TyrS type 2 subfamily. Homodimer.

The protein localises to the cytoplasm. The enzyme catalyses tRNA(Tyr) + L-tyrosine + ATP = L-tyrosyl-tRNA(Tyr) + AMP + diphosphate + H(+). Functionally, catalyzes the attachment of tyrosine to tRNA(Tyr) in a two-step reaction: tyrosine is first activated by ATP to form Tyr-AMP and then transferred to the acceptor end of tRNA(Tyr). The protein is Tyrosine--tRNA ligase of Geobacter metallireducens (strain ATCC 53774 / DSM 7210 / GS-15).